The sequence spans 209 residues: MKKSRKKENMDSKERNQKEAERSEARNSESPAEKAGETKVSPENEPSSPEAEKNPEEACREENEILKDQLFRLAADFDNFRKRTARQMEENRKSVLEQVLLDFVEVTDNFDRAIKSARTAEDMGPIVSGIEQLSKQFFSILEKYGLERVKCEKAGEFDPHRHEAIHHIETSEVPDNTIVEIYKEGYALNEKVVRPALVSVARSPEEAEK.

Residues 1-63 (MKKSRKKENM…NPEEACREEN (63 aa)) are disordered. Basic and acidic residues-rich tracts occupy residues 7-42 (KENM…KVSP) and 50-63 (EAEK…REEN).

Belongs to the GrpE family. Homodimer.

The protein localises to the cytoplasm. Participates actively in the response to hyperosmotic and heat shock by preventing the aggregation of stress-denatured proteins, in association with DnaK and GrpE. It is the nucleotide exchange factor for DnaK and may function as a thermosensor. Unfolded proteins bind initially to DnaJ; upon interaction with the DnaJ-bound protein, DnaK hydrolyzes its bound ATP, resulting in the formation of a stable complex. GrpE releases ADP from DnaK; ATP binding to DnaK triggers the release of the substrate protein, thus completing the reaction cycle. Several rounds of ATP-dependent interactions between DnaJ, DnaK and GrpE are required for fully efficient folding. In Methanosarcina mazei (strain ATCC BAA-159 / DSM 3647 / Goe1 / Go1 / JCM 11833 / OCM 88) (Methanosarcina frisia), this protein is Protein GrpE.